Here is a 97-residue protein sequence, read N- to C-terminus: Co-chaperonin GroES (97 aa).

Belongs to the GroES chaperonin family. In terms of assembly, heptamer of 7 subunits arranged in a ring. Interacts with the chaperonin GroEL.

It is found in the cytoplasm. Functionally, together with the chaperonin GroEL, plays an essential role in assisting protein folding. The GroEL-GroES system forms a nano-cage that allows encapsulation of the non-native substrate proteins and provides a physical environment optimized to promote and accelerate protein folding. GroES binds to the apical surface of the GroEL ring, thereby capping the opening of the GroEL channel. The polypeptide is Co-chaperonin GroES (Pectobacterium atrosepticum (strain SCRI 1043 / ATCC BAA-672) (Erwinia carotovora subsp. atroseptica)).